A 366-amino-acid polypeptide reads, in one-letter code: Isocitrate dehydrogenase [NAD] subunit alpha, mitochondrial (366 aa).

A mitochondrion-targeting transit peptide spans 1–27 (MAGPAWISKVSRLLGAFHNQKQVTRGF). Lys-77 is modified (N6-succinyllysine). Thr-101 bears the Phosphothreonine mark. Substrate contacts are provided by Arg-115, Arg-125, and Arg-146. Lys-223 carries the N6-acetyllysine modification. Residues Asp-233, Asp-257, and Asp-261 each contribute to the Mg(2+) site. Lys-343 is subject to N6-acetyllysine; alternate. Position 343 is an N6-succinyllysine; alternate (Lys-343). Residue Lys-350 is modified to N6-succinyllysine.

Belongs to the isocitrate and isopropylmalate dehydrogenases family. Heterooligomer of subunits alpha (IDH3A), beta (IDH3B), and gamma (IDH3G) in the apparent ratio of 2:1:1. The heterodimer containing one IDH3A and one IDH3B subunit and the heterodimer containing one IDH3A and one IDH3G subunit assemble into a heterotetramer (which contains two subunits of IDH3A, one of IDH3B and one of IDH3G) and further into the heterooctamer. Mg(2+) is required as a cofactor. The cofactor is Mn(2+).

The protein resides in the mitochondrion. It carries out the reaction D-threo-isocitrate + NAD(+) = 2-oxoglutarate + CO2 + NADH. Its activity is regulated as follows. The heterotetramer and the heterodimer composed of IDH3A and IDH3G subunits can be allosterically activated by citrate (CIT) or/and ADP, and the two activators can act independently or synergistically. The heterodimer composed of IDH3A and IDH3B subunits cannot be allosterically regulated and the allosteric regulation of the heterotetramer is through the IDH3G subunit and not the IDH3B subunit. The IDH3G subunit contains the allosteric site which consists of a CIT-binding site and an ADP-binding site, and the binding of CIT and ADP causes conformational changes at the allosteric site which are transmitted to the active site in the catalytic subunit (IDH3A) through a cascade of conformational changes at the heterodimer interface, leading to stabilization of the isocitrate-binding at the active site and thus activation of the enzyme. ATP can activate the heterotetramer and the heterodimer composed of IDH3A and IDH3G subunits at low concentrations but inhibits their activities at high concentrations, whereas ATP exhibits only inhibitory effect on the heterodimer composed of IDH3A and IDH3B subunits. In terms of biological role, catalytic subunit of the enzyme which catalyzes the decarboxylation of isocitrate (ICT) into alpha-ketoglutarate. The heterodimer composed of the alpha (IDH3A) and beta (IDH3B) subunits and the heterodimer composed of the alpha (IDH3A) and gamma (IDH3G) subunits, have considerable basal activity but the full activity of the heterotetramer (containing two subunits of IDH3A, one of IDH3B and one of IDH3G) requires the assembly and cooperative function of both heterodimers. In Sus scrofa (Pig), this protein is Isocitrate dehydrogenase [NAD] subunit alpha, mitochondrial (IDH3A).